Here is a 125-residue protein sequence, read N- to C-terminus: MNDLKFTTTHEWLREDEEEVTVGITDHAQELLGDMVFVELPEIGDEVSAGQELGVVESVKAASDFYAPISGVVTAVNEAVGKNPALVNHDPYHEGWLVKLKPSHPDEIKSLLSDEQYQNEIAEEN.

The 83-residue stretch at 19–101 folds into the Lipoyl-binding domain; that stretch reads EVTVGITDHA…YHEGWLVKLK (83 aa). K60 is subject to N6-lipoyllysine.

This sequence belongs to the GcvH family. In terms of assembly, the glycine cleavage system is composed of four proteins: P, T, L and H. It depends on (R)-lipoate as a cofactor.

In terms of biological role, the glycine cleavage system catalyzes the degradation of glycine. The H protein shuttles the methylamine group of glycine from the P protein to the T protein. In Legionella pneumophila (strain Corby), this protein is Glycine cleavage system H protein.